A 180-amino-acid polypeptide reads, in one-letter code: uncharacterized protein (180 aa).

Residues 1–21 (MKQCIAFMAILALSLSAISEA) form the signal peptide. The segment at 23–81 (GGRGVRSSGYSRPVATKPAPAPKQTQTQQQSQQPDATFGQQNMQNTATNTPNNPNNRLA) is disordered. A compositionally biased stretch (low complexity) spans 27–78 (VRSSGYSRPVATKPAPAPKQTQTQQQSQQPDATFGQQNMQNTATNTPNNPNN).

This is an uncharacterized protein from Pasteurella multocida (strain Pm70).